Consider the following 268-residue polypeptide: Ribosomal RNA small subunit methyltransferase A (268 aa).

Positions 23, 25, 50, 72, 97, and 116 each coordinate S-adenosyl-L-methionine.

This sequence belongs to the class I-like SAM-binding methyltransferase superfamily. rRNA adenine N(6)-methyltransferase family. RsmA subfamily.

Its subcellular location is the cytoplasm. It catalyses the reaction adenosine(1518)/adenosine(1519) in 16S rRNA + 4 S-adenosyl-L-methionine = N(6)-dimethyladenosine(1518)/N(6)-dimethyladenosine(1519) in 16S rRNA + 4 S-adenosyl-L-homocysteine + 4 H(+). Specifically dimethylates two adjacent adenosines (A1518 and A1519) in the loop of a conserved hairpin near the 3'-end of 16S rRNA in the 30S particle. May play a critical role in biogenesis of 30S subunits. The chain is Ribosomal RNA small subunit methyltransferase A from Rickettsia prowazekii (strain Madrid E).